The following is a 713-amino-acid chain: B3 domain-containing transcription factor VAL3 (713 aa).

Residues 328-427 (FEKILSATDT…KLILGFRKAS (100 aa)) constitute a DNA-binding region (TF-B3). Disordered regions lie at residues 459-478 (VECS…SKRQ) and 616-713 (LNSD…TSSM). A compositionally biased stretch (basic residues) spans 464–477 (GKKKSSMMITRSKR). Residues 616-629 (LNSDNGLHQSANNS) are compositionally biased toward polar residues. Basic and acidic residues predominate over residues 663 to 674 (TKSETLPHDDTV). Low complexity predominate over residues 676–688 (SSFTSPSSSSAHS). Positions 690–700 (NNKEDEGKLKT) are enriched in basic and acidic residues. The segment covering 701–713 (TTEIADTTTTSSM) has biased composition (low complexity).

It localises to the nucleus. Functionally, may be involved in plant development. This Arabidopsis thaliana (Mouse-ear cress) protein is B3 domain-containing transcription factor VAL3 (VAL3).